The primary structure comprises 206 residues: MRRTGAPAQADSRGRGRARGGCPGGEATLSQPPPRGGTRGQEPQMKETIMNQEKLAKLQAQVRIGGKGTARRKKKVVHRTATADDKKLQFSLKKLGVNNISGIEEVNMFTNQGTVIHFNNPKVQASLAANTFTITGHAETKQLTEMLPSILNQLGADSLTSLRRLAEALPKQSVDGKAPLATGEDDDDEVPDLVENFDEASKNEAN.

The disordered stretch occupies residues 1-42; sequence MRRTGAPAQADSRGRGRARGGCPGGEATLSQPPPRGGTRGQE. At arginine 19 the chain carries Omega-N-methylarginine. At serine 30 the chain carries Phosphoserine. An N6-methyllysine mark is found at lysine 46 and lysine 54. Positions 82–147 constitute an NAC-A/B domain; the sequence is TADDKKLQFS…AETKQLTEML (66 aa). The residue at position 160 (threonine 160) is a Phosphothreonine. The tract at residues 170–206 is disordered; that stretch reads PKQSVDGKAPLATGEDDDDEVPDLVENFDEASKNEAN. Residue serine 173 is modified to Phosphoserine. Residues 183–198 show a composition bias toward acidic residues; the sequence is GEDDDDEVPDLVENFD.

It belongs to the NAC-beta family. As to quaternary structure, part of the nascent polypeptide-associated complex (NAC), which is a heterodimer of NACA and BTF3 (via NAC-A/B domains). NAC associates with ribosomes through the BTF3/NACB subunit. Both subunits can contact nascent polypeptide chains.

Its subcellular location is the cytoplasm. The protein resides in the nucleus. Its function is as follows. When associated with NACA, prevents inappropriate targeting of non-secretory polypeptides to the endoplasmic reticulum (ER). Binds to nascent polypeptide chains as they emerge from the ribosome and blocks their interaction with the signal recognition particle (SRP), which normally targets nascent secretory peptides to the ER. BTF3 is also a general transcription factor that can form a stable complex with RNA polymerase II. Required for the initiation of transcription. This is Transcription factor BTF3 (BTF3) from Homo sapiens (Human).